The primary structure comprises 347 residues: GMP reductase (347 aa).

108–131 (ADFEKTVQILALNPALNFVCIDVA) lines the NADP(+) pocket. Residues Gly-181 and Gly-183 each contribute to the K(+) site. The Thioimidate intermediate role is filled by Cys-186. 216–239 (IVSDGGCTMPGDVAKAFGGGADFV) is a binding site for NADP(+).

Belongs to the IMPDH/GMPR family. GuaC type 1 subfamily. Homotetramer.

It catalyses the reaction IMP + NH4(+) + NADP(+) = GMP + NADPH + 2 H(+). Functionally, catalyzes the irreversible NADPH-dependent deamination of GMP to IMP. It functions in the conversion of nucleobase, nucleoside and nucleotide derivatives of G to A nucleotides, and in maintaining the intracellular balance of A and G nucleotides. This Salmonella typhi protein is GMP reductase.